The sequence spans 797 residues: Discoidin domain-containing receptor tyrosine kinase B (797 aa).

The N-terminal stretch at 1-19 (MKLLLYLFGVTFHSNTVVA) is a signal peptide. Residues 20 to 384 (LELRECSHQL…VTEHDDGTSM (365 aa)) are Extracellular-facing. Residues 25–181 (CSHQLGMSNR…VCMRVEVFGC (157 aa)) form the F5/8 type C domain. Cys-25 and Cys-181 are disulfide-bonded. The interval 46–66 (SFDLQSTGPQHARAHQESGSG) is disordered. Residues Asn-141, Asn-167, Asn-264, and Asn-353 are each glycosylated (N-linked (GlcNAc...) asparagine). A helical membrane pass occupies residues 385–405 (FAFIIFFFMFLIVAVIILTVL). Over 406-797 (YRKREYRVKA…LVHTSPHIHF (392 aa)) the chain is Cytoplasmic. Residues 527–785 (LICVSRIGQG…PSFENVHLHL (259 aa)) form the Protein kinase domain. ATP is bound by residues 533 to 541 (IGQGEFGEV) and Lys-554. The Proton acceptor role is filled by Asp-645.

The protein belongs to the protein kinase superfamily. Tyr protein kinase family. Insulin receptor subfamily. As to quaternary structure, interacts with shc-1. Autophosphorylated on tyrosine residues. Post-translationally, N-glycosylation at Asn-141 is required for axon regeneration after injury but is dispensable for kinase activity and axon localization. Expressed in some neurons in head and tail, some motoneurons in ventral nerve cord, in PVP interneurons, seam cells, rectal gland cells, vulva cells and some non-neuronal cells in the tail. Expressed in D-type motor neurons.

Its subcellular location is the cell membrane. It is found in the cell projection. The protein resides in the axon. The protein localises to the perikaryon. The catalysed reaction is L-tyrosyl-[protein] + ATP = O-phospho-L-tyrosyl-[protein] + ADP + H(+). Functionally, tyrosine-protein kinase receptor which, together with ddr-1, is involved in axon guidance to establish the tracts for the ventral and dorsal nerve cords during nervous system development. Acts upstream of the adapter shc-1, and the tyrosine kinase receptors svh-1 and svh-2 to regulate axon regeneration following injury in D-type motor neurons. May mediate axon regeneration in association with the collagen emb-9. This chain is Discoidin domain-containing receptor tyrosine kinase B, found in Caenorhabditis elegans.